Reading from the N-terminus, the 1004-residue chain is Glutamate [NMDA] receptor subunit 1 (1004 aa).

Positions 1–39 (MAGTDSPAAARFVYRCLLFAPAIVVGLLLPLTLPPIAAA) are cleaved as a signal peptide. The Extracellular segment spans residues 40–585 (QRHTASDNPS…TLVSFLQPFS (546 aa)). N-linked (GlcNAc...) asparagine glycosylation is found at Asn-270, Asn-326, Asn-357, Asn-409, Asn-466, Asn-493, and Asn-513. Residues 542 to 544 (PLT) and Arg-549 each bind glycine. A helical membrane pass occupies residues 586–606 (NTLWILVMVSVHVVALVLYLL). Over 607-663 (DRFSPFGRFKLSHSDSNEEKALNLSSAVWFAWGVLLNSGIGEGTPRSFSARVLGMVW) the chain is Cytoplasmic. Residues 664–684 (AGFAMIIVASYTANLAAFLVL) form a helical membrane-spanning segment. The Extracellular portion of the chain corresponds to 685 to 843 (ERPKTKLSGI…KTPNTLGLKN (159 aa)). A glycan (N-linked (GlcNAc...) asparagine) is linked at Asn-705. The glycine site is built by Ser-715 and Asp-759. The helical transmembrane segment at 844–864 (MAGVFILVGVGIAGGVGLIII) threads the bilayer. The Cytoplasmic segment spans residues 865–1004 (EVIYKKHQVK…YTSDVSHLVV (140 aa)). The tract at residues 980-1004 (TRPQQNILPPRYSPGYTSDVSHLVV) is disordered. Residues 994–1004 (GYTSDVSHLVV) show a composition bias toward polar residues.

Belongs to the glutamate-gated ion channel (TC 1.A.10.1) family. As to quaternary structure, forms a heteromeric NMDA channel with Nmdar2.

It localises to the cell membrane. It is found in the postsynaptic cell membrane. The protein localises to the postsynaptic density. In terms of biological role, NMDA receptor subtype of glutamate-gated ion channels with high calcium permeability and voltage-dependent sensitivity to magnesium. Mediated by glycine. This protein plays a key role in synaptic plasticity, synaptogenesis, excitotoxicity, memory acquisition and learning. It mediates neuronal functions in glutamate neurotransmission. Is involved in the cell surface targeting of NMDA receptors. Plays a role in associative learning and in long-term memory consolidation. The polypeptide is Glutamate [NMDA] receptor subunit 1 (Drosophila pseudoobscura pseudoobscura (Fruit fly)).